Consider the following 131-residue polypeptide: MRKPCYAVYHPALRLKCLVRKGLGKIKGDTDMCDKQQLKKKEKEKQRAQKVACGPRDPPCTFSRSYTDQKRKEIHLGSTEWGLKESFTLTRGPNRRGNVGKGVKRPMVNKKLGQLELTSLDLRWQKEGKGN.

The protein resides in the mitochondrion. The protein localises to the nucleus. Its function is as follows. Has a role in meiosis. This is Meiotically up-regulated gene 115 protein (mug115) from Schizosaccharomyces pombe (strain 972 / ATCC 24843) (Fission yeast).